Reading from the N-terminus, the 1024-residue chain is Beta-galactosidase (1024 aa).

The substrate site is built by Asn103 and Asp202. Asp202 is a Na(+) binding site. Residues Glu417, His419, and Glu462 each coordinate Mg(2+). Residues Glu462 and 538-541 each bind substrate; that span reads EYAH. Glu462 functions as the Proton donor in the catalytic mechanism. Glu538 functions as the Nucleophile in the catalytic mechanism. Asn598 provides a ligand contact to Mg(2+). Residues Phe602 and Asn605 each coordinate Na(+). Positions 605 and 1000 each coordinate substrate.

Belongs to the glycosyl hydrolase 2 family. In terms of assembly, homotetramer. The cofactor is Mg(2+). Na(+) serves as cofactor.

The catalysed reaction is Hydrolysis of terminal non-reducing beta-D-galactose residues in beta-D-galactosides.. The chain is Beta-galactosidase from Escherichia coli O1:K1 / APEC.